A 464-amino-acid chain; its full sequence is Siroheme synthase (464 aa).

The precorrin-2 dehydrogenase /sirohydrochlorin ferrochelatase stretch occupies residues 1-203 (MDYLPLFHKL…GQGAEAERLL (203 aa)). NAD(+)-binding positions include 22–23 (EI) and 43–44 (PE). S128 carries the phosphoserine modification. The segment at 216-464 (GEVYLVGAGP…AWFEGSQQDQ (249 aa)) is uroporphyrinogen-III C-methyltransferase. Residue P225 coordinates S-adenosyl-L-methionine. Residue D248 is the Proton acceptor of the active site. K270 functions as the Proton donor in the catalytic mechanism. S-adenosyl-L-methionine is bound by residues 301–303 (GGD), I306, 331–332 (TA), M383, and G412.

It in the N-terminal section; belongs to the precorrin-2 dehydrogenase / sirohydrochlorin ferrochelatase family. This sequence in the C-terminal section; belongs to the precorrin methyltransferase family.

It catalyses the reaction uroporphyrinogen III + 2 S-adenosyl-L-methionine = precorrin-2 + 2 S-adenosyl-L-homocysteine + H(+). The enzyme catalyses precorrin-2 + NAD(+) = sirohydrochlorin + NADH + 2 H(+). The catalysed reaction is siroheme + 2 H(+) = sirohydrochlorin + Fe(2+). The protein operates within cofactor biosynthesis; adenosylcobalamin biosynthesis; precorrin-2 from uroporphyrinogen III: step 1/1. Its pathway is cofactor biosynthesis; adenosylcobalamin biosynthesis; sirohydrochlorin from precorrin-2: step 1/1. It functions in the pathway porphyrin-containing compound metabolism; siroheme biosynthesis; precorrin-2 from uroporphyrinogen III: step 1/1. It participates in porphyrin-containing compound metabolism; siroheme biosynthesis; siroheme from sirohydrochlorin: step 1/1. The protein operates within porphyrin-containing compound metabolism; siroheme biosynthesis; sirohydrochlorin from precorrin-2: step 1/1. Its function is as follows. Multifunctional enzyme that catalyzes the SAM-dependent methylations of uroporphyrinogen III at position C-2 and C-7 to form precorrin-2 via precorrin-1. Then it catalyzes the NAD-dependent ring dehydrogenation of precorrin-2 to yield sirohydrochlorin. Finally, it catalyzes the ferrochelation of sirohydrochlorin to yield siroheme. This Pseudomonas putida (strain W619) protein is Siroheme synthase.